The sequence spans 41 residues: Photosystem I reaction center subunit IX (41 aa).

A helical transmembrane segment spans residues 7–29 (YLSTAPVLLTVWLSITASGIMII).

It belongs to the PsaJ family.

It localises to the plastid. The protein localises to the chloroplast thylakoid membrane. In terms of biological role, may help in the organization of the PsaE and PsaF subunits. This is Photosystem I reaction center subunit IX from Heterosigma akashiwo (strain NIES-293 / 8280G21-1).